We begin with the raw amino-acid sequence, 206 residues long: Putative cryptic phosphonate transport system permease protein PhnE1 (206 aa).

The next 3 membrane-spanning stretches (helical) occupy residues 30-50 (WFSLLSWAVVLAVLVVSWQGA), 92-112 (IAVWGTALAVVLSIPFGLMSA), and 137-157 (MVFAMLFVVAVGLGPFAGVLA).

As to quaternary structure, if the reading frame is restored, the complex is composed of two ATP-binding proteins (PhnC), two transmembrane proteins (PhnE) and a solute-binding protein (PhnD).

The protein localises to the cell inner membrane. Functionally, N-terminal fragment of the PhnE protein, part of a phosphonate usage operon that is cryptic in K12 strains. Growth of K12 strains on phosphonate can be observed when it is used as the sole phosphorus source after a 60 hour lag period, suggesting the operon is activated. An intact PhnE in strain B is (AC A0A140NFA3). Part of the binding-protein-dependent transport system for phosphonates; probably responsible for the translocation of the substrate across the membrane. The sequence is that of Putative cryptic phosphonate transport system permease protein PhnE1 (phnE1) from Escherichia coli (strain K12).